A 345-amino-acid chain; its full sequence is NADPH dehydrogenase (345 aa).

23 to 26 (SPMC) is an FMN binding site. Tyr-28 serves as a coordination point for substrate. Residues Ala-60 and Gln-102 each contribute to the FMN site. 164–167 (HGAH) provides a ligand contact to substrate. Residues Arg-215 and 307 to 308 (GR) each bind FMN.

The protein belongs to the NADH:flavin oxidoreductase/NADH oxidase family. NamA subfamily. As to quaternary structure, homotetramer. It depends on FMN as a cofactor.

It catalyses the reaction A + NADPH + H(+) = AH2 + NADP(+). Its function is as follows. Catalyzes the reduction of the double bond of an array of alpha,beta-unsaturated aldehydes and ketones. It also reduces the nitro group of nitroester and nitroaromatic compounds. It could have a role in detoxification processes. The sequence is that of NADPH dehydrogenase from Bacillus anthracis (strain CDC 684 / NRRL 3495).